The primary structure comprises 158 residues: 2-C-methyl-D-erythritol 2,4-cyclodiphosphate synthase (158 aa).

A divalent metal cation is bound by residues Asp9 and His11. Residues 9-11 (DVH) and 35-36 (HS) contribute to the 4-CDP-2-C-methyl-D-erythritol 2-phosphate site. His43 lines the a divalent metal cation pocket. Residues 57–59 (DIG), 62–66 (FPDTD), 133–136 (TTTE), Phe140, and Arg143 each bind 4-CDP-2-C-methyl-D-erythritol 2-phosphate.

This sequence belongs to the IspF family. Homotrimer. The cofactor is a divalent metal cation.

The catalysed reaction is 4-CDP-2-C-methyl-D-erythritol 2-phosphate = 2-C-methyl-D-erythritol 2,4-cyclic diphosphate + CMP. It functions in the pathway isoprenoid biosynthesis; isopentenyl diphosphate biosynthesis via DXP pathway; isopentenyl diphosphate from 1-deoxy-D-xylulose 5-phosphate: step 4/6. In terms of biological role, involved in the biosynthesis of isopentenyl diphosphate (IPP) and dimethylallyl diphosphate (DMAPP), two major building blocks of isoprenoid compounds. Catalyzes the conversion of 4-diphosphocytidyl-2-C-methyl-D-erythritol 2-phosphate (CDP-ME2P) to 2-C-methyl-D-erythritol 2,4-cyclodiphosphate (ME-CPP) with a corresponding release of cytidine 5-monophosphate (CMP). This is 2-C-methyl-D-erythritol 2,4-cyclodiphosphate synthase from Haemophilus influenzae (strain PittGG).